We begin with the raw amino-acid sequence, 436 residues long: Bifunctional IPC transferase and DIPP synthase (436 aa).

Positions 11 to 241 (GVGAAVLAAG…LSEEMVLGWA (231 aa)) are mobA-like NTP transferase. CTP-binding positions include 17–19 (LAA) and K32. A CDP-alcohol phosphatidyltransferases region spans residues 242-435 (ASGNDGPVSR…RRLLALKRGR (194 aa)). 3 helical membrane-spanning segments follow: residues 275-295 (VSLL…AGRL), 349-371 (AGTR…VSYT), and 397-417 (LAVL…LATG).

The protein in the N-terminal section; belongs to the MobA family. In the C-terminal section; belongs to the CDP-alcohol phosphatidyltransferase class-I family.

The protein localises to the membrane. The catalysed reaction is 1D-myo-inositol 3-phosphate + CTP + H(+) = CDP-1L-myo-inositol + diphosphate. It catalyses the reaction CDP-1L-myo-inositol + 1D-myo-inositol 3-phosphate = bis(1L-myo-inositol) 3,1'-phosphate 1-phosphate + CMP + H(+). Functionally, involved in biosynthesis of di-myo-inositol phosphate (DIP), a widespread organic solute in microorganisms adapted to hot environments. Catalyzes the condensation of CTP and L-myo-inositol-1-phosphate into CDP-L-myo-inositol, as well as the biosynthesis of di-myo-inositol-1,3'-phosphate-1'-phosphate (DIPP) from CDP-L-myo-inositol and L-myo-inositol-1-phosphate. In Rubrobacter xylanophilus (strain DSM 9941 / JCM 11954 / NBRC 16129 / PRD-1), this protein is Bifunctional IPC transferase and DIPP synthase.